A 218-amino-acid chain; its full sequence is Cold-regulated protein 28 (218 aa).

Disordered stretches follow at residues 1–51 (MEND…ADSK) and 166–218 (TKHS…KPRT). Positions 20-37 (EASAESQSESTLSNSLDS) are enriched in low complexity. Basic and acidic residues predominate over residues 186–207 (GEVSKKREREANNDDSSLKEDQ).

The protein resides in the nucleus. Together with COR27, involved in central circadian clock regulation and in flowering promotion, by binding to the chromatin of clock-associated evening genes TOC1, PRR5, ELF4 and cold-responsive genes in order to repress their transcription. Negative regulator of freezing tolerance. The polypeptide is Cold-regulated protein 28 (Arabidopsis thaliana (Mouse-ear cress)).